The following is an 89-amino-acid chain: Small ribosomal subunit protein uS15 (89 aa).

Positions 1 to 21 (MSLHQERKSELVSKFRTHESD) are enriched in basic and acidic residues. The disordered stretch occupies residues 1–25 (MSLHQERKSELVSKFRTHESDTGSP).

It belongs to the universal ribosomal protein uS15 family. Part of the 30S ribosomal subunit. Forms a bridge to the 50S subunit in the 70S ribosome, contacting the 23S rRNA.

Its function is as follows. One of the primary rRNA binding proteins, it binds directly to 16S rRNA where it helps nucleate assembly of the platform of the 30S subunit by binding and bridging several RNA helices of the 16S rRNA. In terms of biological role, forms an intersubunit bridge (bridge B4) with the 23S rRNA of the 50S subunit in the ribosome. The sequence is that of Small ribosomal subunit protein uS15 from Myxococcus xanthus (strain DK1622).